We begin with the raw amino-acid sequence, 185 residues long: Ribosome maturation factor RimM (185 aa).

The PRC barrel domain occupies 103–177 (SEEYYWYEIL…SIIVKKIEWY (75 aa)).

It belongs to the RimM family. Binds ribosomal protein uS19.

The protein resides in the cytoplasm. Its function is as follows. An accessory protein needed during the final step in the assembly of 30S ribosomal subunit, possibly for assembly of the head region. Essential for efficient processing of 16S rRNA. May be needed both before and after RbfA during the maturation of 16S rRNA. It has affinity for free ribosomal 30S subunits but not for 70S ribosomes. The protein is Ribosome maturation factor RimM of Petrotoga mobilis (strain DSM 10674 / SJ95).